A 743-amino-acid polypeptide reads, in one-letter code: MSTDNSKIIYTITDEAPALATYSLLPIIQAYTASSGINVETRDISLAGRILANFPKYLTKEQRIDDALAELGELAQTPEANIIKLPNISASIPQLEAVIKELQAKGYDLPHYPAEPQNEAEESIKLTYAKILGSAVNPVLREGNSDRRAPASVKQYARNNPHSMGAWSKESKSHVAHMASGDFYGSEKSVTIDGATSVNIEFVAKNGDVTLLKSKLPLLDKEIIDASVMSKSALVEFFETEINKAKEEDVLLSLHLKATMMKVSDPVMFGHAVRVFYKDVFAKHAATFEQLGVDADNGIGDVYAKIARLPAAQKEEIEADLQAVYATRPEMAMVDSDKGITNLHVPSDVIIDASMPAALRASGMMWGPDGKQKDTKFMIPDRNYAGVFSAVVDFCRENGAFNPATMGTVPNVGLMAQKAEEYGSHDKTFTMKAAGTVRVVNSQGERLIEQEVAQGDIYRMCQVKDAPIQDWVKLAVTRARATGTPTVFWLDENRGHDEQMIKKVNTYLADHDTTGLDIQILEPVKACEFTLARVAKGEDAISVTGNVLRDYLTDLFPILELGTSAKMLSIVPLMNGGGLFETGAGGSAPKHVQQFEKENHLRWDSLGEFLALAASLEHVAVTTGNARAQILADTLDAATGKFLDTNKSPSRKVGELDNRGSHFYLAMYWAQALAAQTTDTELQASFSSVAQALTKQEEKIVAELNAAQGPAIDLNGYYFADTKLAEKAMRPSETFNTILSALL.

Residues Asn-87 and Ser-89 each coordinate NADP(+). D-threo-isocitrate-binding residues include Ser-134, Asn-137, Arg-141, Arg-147, and Lys-257. Asn-137 is a binding site for NADP(+). Residue Asp-352 participates in Mg(2+) binding. Tyr-422 and Arg-549 together coordinate D-threo-isocitrate. Asp-550 and Asp-554 together coordinate Mg(2+). Residues Ser-587, His-591, Arg-602, Asp-604, and Arg-651 each contribute to the NADP(+) site.

It belongs to the monomeric-type IDH family. In terms of assembly, monomer. Requires Mg(2+) as cofactor. The cofactor is Mn(2+).

It catalyses the reaction D-threo-isocitrate + NADP(+) = 2-oxoglutarate + CO2 + NADPH. Catalyzes the oxidative decarboxylation of isocitrate to 2-oxoglutarate and carbon dioxide with the concomitant reduction of NADP(+). The sequence is that of Isocitrate dehydrogenase [NADP] 2 (icd2) from Colwellia maris.